The following is an 860-amino-acid chain: Protein MCM10 homolog (860 aa).

Residues 1–145 (MEVDADLELL…PKKSPENKMV (145 aa)) form an N-terminal domain region. Residues 18–225 (EAAERNGVVS…GQSTATQPIT (208 aa)) form a disordered region. Composition is skewed to acidic residues over residues 32 to 46 (SELDEFDELFDGDED) and 64 to 84 (VEEDFTTLFGDIDDIKEEEAA). The stretch at 93–131 (SSVCQEKSKDELEDELRKMQAQMKKLQEQLQKTALAKTS) forms a coiled coil. Residues 98–110 (EKSKDELEDELRK) are compositionally biased toward basic and acidic residues. 4 stretches are compositionally biased toward polar residues: residues 120–134 (EQLQKTALAKTSSPG), 144–154 (MVQSGKTSRTS), 164–175 (SNTVAPQLTSPT), and 214–225 (RPGQSTATQPIT). The tract at residues 230–380 (SPVGQQYHVE…LMGDAVDLGT (151 aa)) is OB-fold domain. A zinc finger-like 1 region spans residues 381–406 (CKARKKNGDPCTQMVNLNDCEYCQYH). Disordered stretches follow at residues 553 to 591 (QQKQQMLNARKKRAEESQKRFLESTEKSEKSSTLTSSAC) and 657 to 700 (QTLA…NEPA). The segment covering 565-582 (RAEESQKRFLESTEKSEK) has biased composition (basic and acidic residues). The segment at 596-860 (SPKQGAEFPN…EHGKFLNSLK (265 aa)) is C-terminal domain. Zinc finger-like stretches follow at residues 768 to 787 (CKTCKYTHFKPKETCVSENH) and 801 to 821 (CPCGNRTISLDRLPKKHCSTC).

This sequence belongs to the MCM10 family. As to quaternary structure, self-associates.

It is found in the nucleus. In terms of biological role, acts as a replication initiation factor that brings together the MCM2-7 helicase and the DNA polymerase alpha/primase complex in order to initiate DNA replication. Additionally, plays a role in preventing DNA damage during replication. The protein is Protein MCM10 homolog (mcm10) of Xenopus laevis (African clawed frog).